Consider the following 421-residue polypeptide: Testin (421 aa).

The PET domain maps to 92–199 (MILTNPVAAR…GDVKLPCELD (108 aa)). A disordered region spans residues 134–164 (KQPVAGSEGAQYRKKQLAKQLPAHDQDPSKC). Residues 155–164 (PAHDQDPSKC) are compositionally biased toward basic and acidic residues. LIM zinc-binding domains lie at 234-297 (YSCY…CDSE), 299-359 (PRCA…NHAV), and 362-421 (QGCH…KMMS).

This sequence belongs to the prickle / espinas / testin family. As to quaternary structure, interacts via LIM domain 1 with ZYX. Interacts (via LIM domain 3) with ENAH and VASP. Interacts with ALKBH4, talin, actin, alpha-actinin, GRIP1 and PXN. Interacts (via LIM domain 2) with ACTL7A (via N-terminus). Heterodimer with ACTL7A; the heterodimer interacts with ENAH to form a heterotrimer.

It localises to the cytoplasm. It is found in the cell junction. Its subcellular location is the focal adhesion. Scaffold protein that may play a role in cell adhesion, cell spreading and in the reorganization of the actin cytoskeleton. Plays a role in the regulation of cell proliferation. May act as a tumor suppressor. The sequence is that of Testin (TES) from Eulemur macaco macaco (Black lemur).